The following is a 2931-amino-acid chain: Probable polyketide synthase 9/36 (2931 aa).

The Ketosynthase family 3 (KS3) domain maps to 11 to 442; sequence EKGVAIVGIG…GSNCCLLISE (432 aa). Residues C181, H323, and H362 each act as for beta-ketoacyl synthase activity in the active site. Residues 635-668 form an acyl/malonyl transferase region; the sequence is GVNPSFILGHSLGEISASYCSGMIDLDTFCYTVY. S645 serves as the catalytic For acyl/malonyl transferase activity. Residues 925–1047 are N-terminal hotdog fold; the sequence is IDHLGTSNSY…ANFQLLDHGN (123 aa). Residues 925–1209 form the PKS/mFAS DH domain; sequence IDHLGTSNSY…CKSLIPIKDS (285 aa). H959 serves as the catalytic Proton acceptor; for dehydratase activity. The segment at 1064–1209 is C-terminal hotdog fold; sequence NLSKLTKNEL…CKSLIPIKDS (146 aa). Residue D1122 is the Proton donor; for dehydratase activity of the active site. The helical transmembrane segment at 2293-2313 threads the bilayer; sequence LINFVMASSAISLIGSTDLCT. A Carrier domain is found at 2429-2506; it reads TGNKNIDELF…TSMKMILNSL (78 aa). The residue at position 2466 (S2466) is an O-(pantetheine 4'-phosphoryl)serine. The helical transmembrane segment at 2553–2573 threads the bilayer; sequence KIILLTGTTGFLGGFLLFNMV.

It depends on pantetheine 4'-phosphate as a cofactor.

The protein resides in the membrane. Functionally, probable polyketide synthase. The protein is Probable polyketide synthase 9/36 (pks9) of Dictyostelium discoideum (Social amoeba).